A 906-amino-acid polypeptide reads, in one-letter code: Probable dipeptidyl-aminopeptidase B (906 aa).

The segment covering 1-11 (MRSSEDREDSE) has biased composition (acidic residues). Residues 1-33 (MRSSEDREDSELLPANRPRSPSRSSYDSDDSGL) are disordered. Over 1–85 (MRSSEDREDS…TKASSSRSRR (85 aa)) the chain is Cytoplasmic. Residues 21 to 33 (PSRSSYDSDDSGL) show a composition bias toward low complexity. Residues 86-106 (LLWLVVLLCCGGWVVAFVLFI) traverse the membrane as a helical; Signal-anchor for type II membrane protein segment. Residues 107–906 (TQGRADYRTA…AKRVWPGFAH (800 aa)) lie on the Vacuolar side of the membrane. 2 N-linked (GlcNAc...) asparagine glycosylation sites follow: asparagine 338 and asparagine 629. Serine 743 functions as the Charge relay system in the catalytic mechanism. Asparagine 797 carries N-linked (GlcNAc...) asparagine glycosylation. Catalysis depends on charge relay system residues aspartate 820 and histidine 853.

Belongs to the peptidase S9B family.

Its subcellular location is the vacuole membrane. It catalyses the reaction Release of an N-terminal dipeptide, Xaa-Yaa-|-Zaa-, from a polypeptide, preferentially when Yaa is Pro, provided Zaa is neither Pro nor hydroxyproline.. Its function is as follows. Type IV dipeptidyl-peptidase which removes N-terminal dipeptides sequentially from polypeptides having unsubstituted N-termini provided that the penultimate residue is proline. This is Probable dipeptidyl-aminopeptidase B (dapB) from Emericella nidulans (strain FGSC A4 / ATCC 38163 / CBS 112.46 / NRRL 194 / M139) (Aspergillus nidulans).